Reading from the N-terminus, the 354-residue chain is Phosphoribosylformylglycinamidine cyclo-ligase (354 aa).

The protein belongs to the AIR synthase family.

The protein localises to the cytoplasm. The catalysed reaction is 2-formamido-N(1)-(5-O-phospho-beta-D-ribosyl)acetamidine + ATP = 5-amino-1-(5-phospho-beta-D-ribosyl)imidazole + ADP + phosphate + H(+). It participates in purine metabolism; IMP biosynthesis via de novo pathway; 5-amino-1-(5-phospho-D-ribosyl)imidazole from N(2)-formyl-N(1)-(5-phospho-D-ribosyl)glycinamide: step 2/2. In Marinobacter nauticus (strain ATCC 700491 / DSM 11845 / VT8) (Marinobacter aquaeolei), this protein is Phosphoribosylformylglycinamidine cyclo-ligase.